Reading from the N-terminus, the 3059-residue chain is Genome polyprotein (3059 aa).

The 145-residue stretch at 154–298 (GVTPYSVQQL…ESTMLSTHHY (145 aa)) folds into the Peptidase S30 domain. Residues His-207, Asp-216, and Ser-249 each act as for P1 proteinase activity in the active site. Positions 349–352 (KITC) match the Involved in interaction with stylet and aphid transmission motif. The Involved in virions binding and aphid transmission motif lies at 607–609 (PTK). The 123-residue stretch at 633–755 (MYIAKSGYCY…DSEMKHYRVG (123 aa)) folds into the Peptidase C6 domain. Residues Cys-641 and His-714 each act as for helper component proteinase activity in the active site. The Helicase ATP-binding domain maps to 1226–1378 (QIAHDLHTDI…TQYPVEIRVE (153 aa)). Position 1239–1246 (1239–1246 (GAVGSGKS)) interacts with ATP. Positions 1328-1331 (DEFH) match the DEFH box motif. Residues 1397 to 1556 (DLTSKCDNLL…GLPISTQSVT (160 aa)) enclose the Helicase C-terminal domain. The short motif at 1883 to 1890 (KKGKTKGK) is the Nuclear localization signal element. Tyr-1905 is subject to O-(5'-phospho-RNA)-tyrosine. Residues 2032–2250 (STSMFRGVRD…VCWGSFHLQD (219 aa)) form the Peptidase C4 domain. Active-site for nuclear inclusion protein A activity residues include His-2077, Asp-2112, and Cys-2182. The 125-residue stretch at 2516 to 2640 (WVYCDADGSQ…AIRPDMEHKL (125 aa)) folds into the RdRp catalytic domain. Thr-3042 is subject to Phosphothreonine.

The protein belongs to the potyviridae genome polyprotein family. Interacts with host eIF4E protein (via cap-binding region); this interaction mediates the translation of the VPg-viral RNA conjugates. Part of a complex that comprises VPg, RNA, host EIF4E and EIF4G; this interaction mediates the translation of the VPg-viral RNA conjugates. Post-translationally, VPg is uridylylated by the polymerase and is covalently attached to the 5'-end of the genomic RNA. This uridylylated form acts as a nucleotide-peptide primer for the polymerase. In terms of processing, phosphorylation inhibits the RNA-binding capacity of the capsid protein. Potyviral RNA is expressed as two polyproteins which undergo post-translational proteolytic processing. Genome polyprotein is processed by NIa-pro, P1 and HC-pro proteinases resulting in the production of at least ten individual proteins. P3N-PIPO polyprotein is cleaved by P1 and HC-pro proteinases resulting in the production of three individual proteins. The P1 proteinase and the HC-pro cleave only their respective C-termini autocatalytically. 6K1 is essential for proper proteolytic separation of P3 from CI.

The protein resides in the host cytoplasmic vesicle. It is found in the host nucleus. It localises to the virion. It catalyses the reaction RNA(n) + a ribonucleoside 5'-triphosphate = RNA(n+1) + diphosphate. It carries out the reaction Hydrolyzes glutaminyl bonds, and activity is further restricted by preferences for the amino acids in P6 - P1' that vary with the species of potyvirus, e.g. Glu-Xaa-Xaa-Tyr-Xaa-Gln-|-(Ser or Gly) for the enzyme from tobacco etch virus. The natural substrate is the viral polyprotein, but other proteins and oligopeptides containing the appropriate consensus sequence are also cleaved.. The catalysed reaction is Hydrolyzes a Gly-|-Gly bond at its own C-terminus, commonly in the sequence -Tyr-Xaa-Val-Gly-|-Gly, in the processing of the potyviral polyprotein.. Functionally, required for aphid transmission and also has proteolytic activity. Only cleaves a Gly-Gly dipeptide at its own C-terminus. Interacts with virions and aphid stylets. Acts as a suppressor of RNA-mediated gene silencing, also known as post-transcriptional gene silencing (PTGS), a mechanism of plant viral defense that limits the accumulation of viral RNAs. May have RNA-binding activity. Has helicase activity. It may be involved in replication. In terms of biological role, indispensable for virus replication. Reduces the abundance of host transcripts related to jasmonic acid biosynthesis therefore altering the host defenses. In order to increase its own stability, decreases host protein degradation pathways. Its function is as follows. Indispensable for virus replication. Functionally, mediates the cap-independent, EIF4E-dependent translation of viral genomic RNAs. Binds to the cap-binding site of host EIF4E and thus interferes with the host EIF4E-dependent mRNA export and translation. VPg-RNA directly binds EIF4E and is a template for transcription. Also forms trimeric complexes with EIF4E-EIF4G, which are templates for translation. Has RNA-binding and proteolytic activities. In terms of biological role, an RNA-dependent RNA polymerase that plays an essential role in the virus replication. Its function is as follows. Involved in aphid transmission, cell-to-cell and systemis movement, encapsidation of the viral RNA and in the regulation of viral RNA amplification. The polypeptide is Genome polyprotein (Potato virus A (PVA)).